The chain runs to 275 residues: Homeobox-leucine zipper protein ATHB-17 (275 aa).

The disordered stretch occupies residues serine 95–leucine 143. The homeobox DNA-binding region spans proline 136–glutamine 195. The leucine-zipper stretch occupies residues leucine 203 to leucine 224. Residues alanine 252–arginine 275 are disordered.

The protein belongs to the HD-ZIP homeobox family. Class II subfamily.

It is found in the nucleus. Functionally, probable transcription factor. The chain is Homeobox-leucine zipper protein ATHB-17 (ATHB-17) from Arabidopsis thaliana (Mouse-ear cress).